Consider the following 155-residue polypeptide: Large ribosomal subunit protein uL22c (155 aa).

Belongs to the universal ribosomal protein uL22 family. In terms of assembly, part of the 50S ribosomal subunit.

It is found in the plastid. Its subcellular location is the chloroplast. Functionally, this protein binds specifically to 23S rRNA. In terms of biological role, the globular domain of the protein is located near the polypeptide exit tunnel on the outside of the subunit, while an extended beta-hairpin is found that lines the wall of the exit tunnel in the center of the 70S ribosome. The protein is Large ribosomal subunit protein uL22c (rpl22) of Solanum bulbocastanum (Wild potato).